A 254-amino-acid polypeptide reads, in one-letter code: MPQQIELRNIALQAAQPLVHGVSLTLQRGRVLALVGGSGSGKSLTCAATLGILPAGVRQTAGEILADGKAVYPCALRGIKIATIMQNPRSAFNPLHTMHTHARETCLALGKPADDATLTAAIEAVGLENAARVLKLYPFEMSGGMLQRMMIAMAVLCESPFIIADEPTTDLDVVAQARILDLLESIMQKQAPGMLLVTHDMGVVARLADDVAVMSQGKIVEQGDVETLFNAPKHTVTRSLVSAHLALYGMELAS.

Positions 2-241 (PQQIELRNIA…PKHTVTRSLV (240 aa)) constitute an ABC transporter domain. 36–43 (GGSGSGKS) provides a ligand contact to ATP.

Belongs to the ABC transporter superfamily. Nickel importer (TC 3.A.1.5.3) family. In terms of assembly, the complex is composed of two ATP-binding proteins (NikD and NikE), two transmembrane proteins (NikB and NikC) and a solute-binding protein (NikA).

Its subcellular location is the cell inner membrane. It carries out the reaction Ni(2+)(out) + ATP + H2O = Ni(2+)(in) + ADP + phosphate + H(+). In terms of biological role, part of the ABC transporter complex NikABCDE involved in nickel import. Responsible for energy coupling to the transport system. In Shigella boydii serotype 4 (strain Sb227), this protein is Nickel import ATP-binding protein NikD.